Consider the following 257-residue polypeptide: Hydroxyacylglutathione hydrolase (257 aa).

7 residues coordinate Zn(2+): H54, H56, D58, H59, H113, D137, and H175.

The protein belongs to the metallo-beta-lactamase superfamily. Glyoxalase II family. Monomer. Requires Zn(2+) as cofactor.

The enzyme catalyses an S-(2-hydroxyacyl)glutathione + H2O = a 2-hydroxy carboxylate + glutathione + H(+). Its pathway is secondary metabolite metabolism; methylglyoxal degradation; (R)-lactate from methylglyoxal: step 2/2. In terms of biological role, thiolesterase that catalyzes the hydrolysis of S-D-lactoyl-glutathione to form glutathione and D-lactic acid. The sequence is that of Hydroxyacylglutathione hydrolase from Synechocystis sp. (strain ATCC 27184 / PCC 6803 / Kazusa).